The chain runs to 184 residues: Holliday junction branch migration complex subunit RuvA (184 aa).

A domain I region spans residues 1–64 (MIRAIEGIIT…EDANLLYGFL (64 aa)). Residues 65–144 (DTNEQKMFEM…SDESVPGYQN (80 aa)) are domain II. Position 144 (Asn-144) is a region of interest, flexible linker. Residues 144-184 (NEALLALEALGFKREKIVKILPDLKSTSTSELVKEALKKLA) are domain III.

It belongs to the RuvA family. Homotetramer. Forms an RuvA(8)-RuvB(12)-Holliday junction (HJ) complex. HJ DNA is sandwiched between 2 RuvA tetramers; dsDNA enters through RuvA and exits via RuvB. An RuvB hexamer assembles on each DNA strand where it exits the tetramer. Each RuvB hexamer is contacted by two RuvA subunits (via domain III) on 2 adjacent RuvB subunits; this complex drives branch migration. In the full resolvosome a probable DNA-RuvA(4)-RuvB(12)-RuvC(2) complex forms which resolves the HJ.

The protein resides in the cytoplasm. The RuvA-RuvB-RuvC complex processes Holliday junction (HJ) DNA during genetic recombination and DNA repair, while the RuvA-RuvB complex plays an important role in the rescue of blocked DNA replication forks via replication fork reversal (RFR). RuvA specifically binds to HJ cruciform DNA, conferring on it an open structure. The RuvB hexamer acts as an ATP-dependent pump, pulling dsDNA into and through the RuvAB complex. HJ branch migration allows RuvC to scan DNA until it finds its consensus sequence, where it cleaves and resolves the cruciform DNA. This is Holliday junction branch migration complex subunit RuvA from Campylobacter curvus (strain 525.92).